Here is a 227-residue protein sequence, read N- to C-terminus: Cytidylate kinase (227 aa).

12–20 (GPSGAGKGT) contacts ATP.

It belongs to the cytidylate kinase family. Type 1 subfamily.

It is found in the cytoplasm. The catalysed reaction is CMP + ATP = CDP + ADP. It carries out the reaction dCMP + ATP = dCDP + ADP. This is Cytidylate kinase from Shigella boydii serotype 4 (strain Sb227).